The primary structure comprises 211 residues: ATP phosphoribosyltransferase (211 aa).

This sequence belongs to the ATP phosphoribosyltransferase family. Short subfamily. In terms of assembly, heteromultimer composed of HisG and HisZ subunits.

The protein localises to the cytoplasm. It catalyses the reaction 1-(5-phospho-beta-D-ribosyl)-ATP + diphosphate = 5-phospho-alpha-D-ribose 1-diphosphate + ATP. Its pathway is amino-acid biosynthesis; L-histidine biosynthesis; L-histidine from 5-phospho-alpha-D-ribose 1-diphosphate: step 1/9. Functionally, catalyzes the condensation of ATP and 5-phosphoribose 1-diphosphate to form N'-(5'-phosphoribosyl)-ATP (PR-ATP). Has a crucial role in the pathway because the rate of histidine biosynthesis seems to be controlled primarily by regulation of HisG enzymatic activity. This Bacillus cereus (strain ATCC 14579 / DSM 31 / CCUG 7414 / JCM 2152 / NBRC 15305 / NCIMB 9373 / NCTC 2599 / NRRL B-3711) protein is ATP phosphoribosyltransferase.